A 296-amino-acid chain; its full sequence is MFKSGFVTIVGRPNVGKSTLLNAIMKEKLSIVSCRPQTTRNNIQTILTEDNYQLVFVDTPGIHKPKHKLGEYMVKSASDAMKDVDLVLFLINPDEKPGRGDLFIIEQLKEVKVPVFLVLNKIDENPQEKVAETLKTYSELMEFEEIIPISALKGKNIDLLKELMFKYIPEGPQYYPEDMIIDQNERFIVAEIVREKALRLLSEEVPHGIAVEILQMKKNEKGTYHIEGNILCEKNSHKPIIIGKGGSKLKKISQYARQDIEAFLQSKVYIRLWVKVKEEWRDNQSLLKELGYKNMK.

The 168-residue stretch at 3 to 170 (KSGFVTIVGR…KELMFKYIPE (168 aa)) folds into the Era-type G domain. The interval 11–18 (GRPNVGKS) is G1. A GTP-binding site is contributed by 11–18 (GRPNVGKS). Residues 37-41 (QTTRN) form a G2 region. A G3 region spans residues 58–61 (DTPG). GTP-binding positions include 58 to 62 (DTPGI) and 120 to 123 (NKID). The G4 stretch occupies residues 120-123 (NKID). Positions 149–151 (ISA) are G5. The region spanning 201-278 (LSEEVPHGIA…YIRLWVKVKE (78 aa)) is the KH type-2 domain.

Belongs to the TRAFAC class TrmE-Era-EngA-EngB-Septin-like GTPase superfamily. Era GTPase family. As to quaternary structure, monomer.

The protein resides in the cytoplasm. It is found in the cell membrane. In terms of biological role, an essential GTPase that binds both GDP and GTP, with rapid nucleotide exchange. Plays a role in 16S rRNA processing and 30S ribosomal subunit biogenesis and possibly also in cell cycle regulation and energy metabolism. The protein is GTPase Era of Clostridium botulinum (strain 657 / Type Ba4).